Reading from the N-terminus, the 139-residue chain is uncharacterized protein (139 aa).

It is found in the mitochondrion. This is an uncharacterized protein from Marchantia polymorpha (Common liverwort).